The chain runs to 192 residues: Probable cobalt-precorrin-6B C(15)-methyltransferase (decarboxylating) (192 aa).

Residues threonine 17, 41–45 (GCGTG), aspartate 62, and alanine 91 each bind S-adenosyl-L-methionine.

This sequence belongs to the methyltransferase superfamily. Archaeal-type CbiT family. As to quaternary structure, homotetramer.

The enzyme catalyses Co-precorrin-6B + S-adenosyl-L-methionine = Co-precorrin-7 + S-adenosyl-L-homocysteine + CO2. It functions in the pathway cofactor biosynthesis; adenosylcobalamin biosynthesis; cob(II)yrinate a,c-diamide from sirohydrochlorin (anaerobic route): step 8/10. Functionally, catalyzes the methylation of C-15 in cobalt-precorrin-6B followed by the decarboxylation of C-12 to form cobalt-precorrin-7. The protein is Probable cobalt-precorrin-6B C(15)-methyltransferase (decarboxylating) of Methanothermobacter thermautotrophicus (strain ATCC 29096 / DSM 1053 / JCM 10044 / NBRC 100330 / Delta H) (Methanobacterium thermoautotrophicum).